Consider the following 104-residue polypeptide: Urease subunit beta (104 aa).

Belongs to the urease beta subunit family. As to quaternary structure, heterotrimer of UreA (gamma), UreB (beta) and UreC (alpha) subunits. Three heterotrimers associate to form the active enzyme.

Its subcellular location is the cytoplasm. It catalyses the reaction urea + 2 H2O + H(+) = hydrogencarbonate + 2 NH4(+). It participates in nitrogen metabolism; urea degradation; CO(2) and NH(3) from urea (urease route): step 1/1. The sequence is that of Urease subunit beta from Rhodopseudomonas palustris (strain BisB5).